Here is a 339-residue protein sequence, read N- to C-terminus: NADH-quinone oxidoreductase subunit H (339 aa).

9 consecutive transmembrane segments (helical) span residues Ile-9–Cys-29, Pro-50–Phe-70, Ile-82–Ile-102, Val-115–Gly-135, Met-161–Ile-181, Met-187–Leu-207, Met-235–Thr-255, Ile-275–Ile-295, and Gly-311–Val-331.

Belongs to the complex I subunit 1 family. As to quaternary structure, NDH-1 is composed of 14 different subunits. Subunits NuoA, H, J, K, L, M, N constitute the membrane sector of the complex.

It localises to the cell inner membrane. The enzyme catalyses a quinone + NADH + 5 H(+)(in) = a quinol + NAD(+) + 4 H(+)(out). Functionally, NDH-1 shuttles electrons from NADH, via FMN and iron-sulfur (Fe-S) centers, to quinones in the respiratory chain. The immediate electron acceptor for the enzyme in this species is believed to be ubiquinone. Couples the redox reaction to proton translocation (for every two electrons transferred, four hydrogen ions are translocated across the cytoplasmic membrane), and thus conserves the redox energy in a proton gradient. This subunit may bind ubiquinone. The polypeptide is NADH-quinone oxidoreductase subunit H (Rickettsia conorii (strain ATCC VR-613 / Malish 7)).